The chain runs to 791 residues: Sphingomyelin phosphodiesterase 4 (791 aa).

A helical transmembrane segment spans residues 755-775 (LFALLSFGLFSSTGLILIISF).

The cofactor is Mg(2+).

It is found in the endoplasmic reticulum membrane. Its subcellular location is the golgi apparatus membrane. The protein localises to the nucleus envelope. It localises to the cell membrane. The protein resides in the sarcolemma. It carries out the reaction a sphingomyelin + H2O = phosphocholine + an N-acylsphing-4-enine + H(+). Functionally, catalyzes the hydrolysis of membrane sphingomyelin to form phosphorylcholine and ceramide. It has a relevant role in the homeostasis of membrane sphingolipids, thereby influencing membrane integrity, and endoplasmic reticulum organization and function. May sensitize cells to DNA damage-induced apoptosis. The sequence is that of Sphingomyelin phosphodiesterase 4 (smpd4) from Danio rerio (Zebrafish).